The following is a 370-amino-acid chain: MGGGDGAAFKRPGDGARLQRVLGLGSRREPRSLPAGGPAPRRTAPPPPGHASAGPAAMSSHIAKSESKTSLLKAAAAAASGGSRAPRHGPARDPGLPSRRLPGSCPATPQSSGDPSSRRPLCRPAPREEGARGSQRVLPQAHCRPREALPAAASRPSPSSPLPPARGRDGEERGLSPALGLRGSLRARGRGDSVPAAASEADPFLHRLRPMLSSAFGQDRSLRPEEIEELREAFREFDKDKDGYINCRDLGNCMRTMGYMPTEMELIELSQQINMNLGGHVDFDDFVELMGPKLLAETADMIGVKELRDAFREFDTNGDGEISTSELREAMRKLLGHQVGHRDIEEIIRDVDLNGDGRVDFEEFVRMMSR.

Residues 1 to 198 (MGGGDGAAFK…GRGDSVPAAA (198 aa)) form a disordered region. Glycine 2 carries N-myristoyl glycine lipidation. A lipid anchor (S-palmitoyl cysteine) is attached at glycine 4. Composition is skewed to low complexity over residues 50 to 61 (HASAGPAAMSSH), 68 to 84 (KTSL…GGSR), and 148 to 157 (ALPAAASRPS). EF-hand domains follow at residues 225-260 (EEIE…MGYM), 279-296 (GHVD…KLLA), 302-337 (IGVK…LLGH), and 339-370 (VGHR…MMSR). Aspartate 238, aspartate 240, aspartate 242, tyrosine 244, and aspartate 249 together coordinate Ca(2+). Residues aspartate 238, aspartate 240, aspartate 242, and tyrosine 244 each contribute to the Mg(2+) site. Ca(2+) contacts are provided by aspartate 315, asparagine 317, aspartate 319, and glutamate 321. Position 323 is a phosphoserine (serine 323). Positions 326, 352, 353, 354, 356, 357, 358, 360, and 363 each coordinate Ca(2+).

As to quaternary structure, homodimer; when bound to calcium or magnesium. Interacts (via C-terminus) with ITPR1, ITPR2 and ITPR3. This binding is calcium dependent and the interaction correlates with calcium concentration. An additional calcium-independent interaction with the N-terminus of ITPR1 results in a decreased InsP(3) binding to the receptor. Interacts with CACNA1A (via C-terminal CDB motif) in the pre- and postsynaptic membranes. Interacts with CACNA1C (via C-terminal C and IQ motifs). The binding to the C motif is calcium independent whereas the binding to IQ requires the presence of calcium and is mutually exclusive with calmodulin binding. Interacts with CACNA1D. Interacts with TRPC5 (via C-terminus). Interacts (via EF-hands 1 and 2) at microtubules with MAP1LC3B. Interacts with MYO1C. Interacts (via EF-hands 1 and 2) with NSMF (via the central NLS-containing motif region), the interaction occurs in a calcium dependent manner after synaptic NMDA receptor stimulation and prevents nuclear import of NSMF. Interacts with SPACA9. Post-translationally, phosphorylated. The phosphorylation regulates the activity. In terms of tissue distribution, retina and brain. Somatodendritic compartment of neurons. Calbrain was found exclusively in brain where it is abundant in the hippocampus, habenular area in the epithalamus and in the cerebellum.

The protein resides in the cytoplasm. Its subcellular location is the cytoskeleton. The protein localises to the perinuclear region. It is found in the cell membrane. It localises to the golgi apparatus. The protein resides in the postsynaptic density. Its subcellular location is the cell cortex. Its function is as follows. Modulates calcium-dependent activity of inositol 1,4,5-triphosphate receptors (ITPRs). Inhibits agonist-induced intracellular calcium signaling. Enhances inactivation and does not support calcium-dependent facilitation of voltage-dependent P/Q-type calcium channels. Causes calcium-dependent facilitation and inhibits inactivation of L-type calcium channels by binding to the same sites as calmodulin in the C-terminal domain of CACNA1C, but has an opposite effect on channel function. Suppresses the calcium-dependent inactivation of CACNA1D. Inhibits TRPC5 channels. Prevents NMDA receptor-induced cellular degeneration. Required for the normal transfer of light signals through the retina. The polypeptide is Calcium-binding protein 1 (CABP1) (Homo sapiens (Human)).